Here is a 413-residue protein sequence, read N- to C-terminus: DNA primase large subunit PriL (413 aa).

Cys230, Cys301, Cys310, and Cys317 together coordinate [4Fe-4S] cluster. Composition is skewed to basic and acidic residues over residues 340–356 (MEKE…QEEK), 362–381 (KEKQ…EEKG), and 388–413 (KKRE…KKRI). Residues 340-413 (MEKEKEEKEE…KEKQEEKKRI (74 aa)) are disordered.

The protein belongs to the eukaryotic-type primase large subunit family. In terms of assembly, heterodimer of a small subunit (PriS) and a large subunit (PriL). The cofactor is [4Fe-4S] cluster.

Functionally, regulatory subunit of DNA primase, an RNA polymerase that catalyzes the synthesis of short RNA molecules used as primers for DNA polymerase during DNA replication. Stabilizes and modulates the activity of the small subunit, increasing the rate of DNA synthesis, and conferring RNA synthesis capability. The DNA polymerase activity may enable DNA primase to also catalyze primer extension after primer synthesis. May also play a role in DNA repair. This is DNA primase large subunit PriL from Methanosarcina barkeri (strain Fusaro / DSM 804).